A 340-amino-acid polypeptide reads, in one-letter code: Ketol-acid reductoisomerase (NADP(+)) (340 aa).

A KARI N-terminal Rossmann domain is found at 1 to 182 (MRVYYDRDCD…GGGRSGIIET (182 aa)). Residues 24–27 (YGSQ), Arg-48, Ser-51, Ser-53, and 83–86 (DELQ) contribute to the NADP(+) site. His-108 is a catalytic residue. Gly-134 is an NADP(+) binding site. The KARI C-terminal knotted domain maps to 183 to 329 (NFRQECETDL…EKLRGMMPWI (147 aa)). Mg(2+) is bound by residues Asp-191, Glu-195, Glu-227, and Glu-231. Ser-252 contributes to the substrate binding site.

Belongs to the ketol-acid reductoisomerase family. It depends on Mg(2+) as a cofactor.

The enzyme catalyses (2R)-2,3-dihydroxy-3-methylbutanoate + NADP(+) = (2S)-2-acetolactate + NADPH + H(+). It catalyses the reaction (2R,3R)-2,3-dihydroxy-3-methylpentanoate + NADP(+) = (S)-2-ethyl-2-hydroxy-3-oxobutanoate + NADPH + H(+). It functions in the pathway amino-acid biosynthesis; L-isoleucine biosynthesis; L-isoleucine from 2-oxobutanoate: step 2/4. The protein operates within amino-acid biosynthesis; L-valine biosynthesis; L-valine from pyruvate: step 2/4. Functionally, involved in the biosynthesis of branched-chain amino acids (BCAA). Catalyzes an alkyl-migration followed by a ketol-acid reduction of (S)-2-acetolactate (S2AL) to yield (R)-2,3-dihydroxy-isovalerate. In the isomerase reaction, S2AL is rearranged via a Mg-dependent methyl migration to produce 3-hydroxy-3-methyl-2-ketobutyrate (HMKB). In the reductase reaction, this 2-ketoacid undergoes a metal-dependent reduction by NADPH to yield (R)-2,3-dihydroxy-isovalerate. This is Ketol-acid reductoisomerase (NADP(+)) from Paracoccus denitrificans (strain Pd 1222).